Consider the following 471-residue polypeptide: V-type ATP synthase beta chain (471 aa).

Belongs to the ATPase alpha/beta chains family.

Its function is as follows. Produces ATP from ADP in the presence of a proton gradient across the membrane. The V-type beta chain is a regulatory subunit. This chain is V-type ATP synthase beta chain (atpB), found in Deinococcus radiodurans (strain ATCC 13939 / DSM 20539 / JCM 16871 / CCUG 27074 / LMG 4051 / NBRC 15346 / NCIMB 9279 / VKM B-1422 / R1).